The following is a 336-amino-acid chain: tRNA N6-adenosine threonylcarbamoyltransferase (336 aa).

Residues H108 and H112 each coordinate Fe cation. Residues 129–133 (LISGG), D161, E178, and S258 each bind substrate. D286 provides a ligand contact to Fe cation.

Belongs to the KAE1 / TsaD family. It depends on Fe(2+) as a cofactor.

Its subcellular location is the cytoplasm. It carries out the reaction L-threonylcarbamoyladenylate + adenosine(37) in tRNA = N(6)-L-threonylcarbamoyladenosine(37) in tRNA + AMP + H(+). Its function is as follows. Required for the formation of a threonylcarbamoyl group on adenosine at position 37 (t(6)A37) in tRNAs that read codons beginning with adenine. Is probably involved in the transfer of the threonylcarbamoyl moiety of threonylcarbamoyl-AMP (TC-AMP) to the N6 group of A37. The protein is tRNA N6-adenosine threonylcarbamoyltransferase of Pyrobaculum neutrophilum (strain DSM 2338 / JCM 9278 / NBRC 100436 / V24Sta) (Thermoproteus neutrophilus).